The following is a 460-amino-acid chain: ATP synthase subunit beta (460 aa).

150–157 (GGAGVGKT) is a binding site for ATP.

This sequence belongs to the ATPase alpha/beta chains family. As to quaternary structure, F-type ATPases have 2 components, CF(1) - the catalytic core - and CF(0) - the membrane proton channel. CF(1) has five subunits: alpha(3), beta(3), gamma(1), delta(1), epsilon(1). CF(0) has three main subunits: a(1), b(2) and c(9-12). The alpha and beta chains form an alternating ring which encloses part of the gamma chain. CF(1) is attached to CF(0) by a central stalk formed by the gamma and epsilon chains, while a peripheral stalk is formed by the delta and b chains.

Its subcellular location is the cell inner membrane. The catalysed reaction is ATP + H2O + 4 H(+)(in) = ADP + phosphate + 5 H(+)(out). Functionally, produces ATP from ADP in the presence of a proton gradient across the membrane. The catalytic sites are hosted primarily by the beta subunits. This Pectobacterium carotovorum subsp. carotovorum (strain PC1) protein is ATP synthase subunit beta.